The following is a 285-amino-acid chain: MKFCRFGQRGQEKPGIIDADGKIRDLSGVVPELTIEALAAAKGADVASLPLVEGEPRYGVPVKGIGKIVAIGLNYEDHAIESNLPIPTEPMMFMKALSSLNGPNDEVVLPKNSTHGDWEVELGVVIGETCRFVSEDEALSKVAGYVLVNDVSERFNQKQRGTQWSKGKGHDTFCPVGPWLVTPDEVGDPQDLDMHLNVNGTRMQTGNTKTMIFNVAQLISYVSEYITLYPGDLMITGTPPGVGEGKKPQAIYLKAGDVMELGIEKLGTQRQQVSEWRHLGDEVFG.

Residue leucine 73 coordinates pyruvate. 3 residues coordinate Mg(2+): glutamate 119, glutamate 121, and aspartate 150. Residues lysine 168 and threonine 238 each coordinate pyruvate.

This sequence belongs to the FAH family. As to quaternary structure, homodimer. Mg(2+) serves as cofactor.

It carries out the reaction 2,4-didehydro-3-deoxy-L-rhamnonate + H2O = (S)-lactate + pyruvate + H(+). It functions in the pathway carbohydrate degradation; L-rhamnose degradation. Functionally, hydrolase that catalyzes the hydrolysis of 2,4-didehydro-3-deoxy-L-rhamnonate to pyruvate and L-lactate. Can also hydrolyze L-2,4-diketo-3-deoxylyxonate and L-2,4-diketo-3-deoxymannonate. In vitro can also use acylpyruvates such as acetylpyruvate and trimethylacetopyruvate. Catalyzes the fifth (last) step in an alternative pathway for rhamnose utilization that does not involve phosphorylated intermediates. The polypeptide is 2,4-didehydro-3-deoxy-L-rhamnonate hydrolase (Sphingomonas sp. (strain SKA58)).